The sequence spans 280 residues: uncharacterized protein (280 aa).

The KilA-N domain maps to 26–127 (YFMSMKLLDV…TRVSILMRYY (102 aa)).

This is an uncharacterized protein from Vertebrata (FPV).